The sequence spans 181 residues: Oligoribonuclease (181 aa).

The Exonuclease domain occupies 8 to 171 (LIWIDLEMTG…DDIRESVAEL (164 aa)). Tyr-129 is an active-site residue.

It belongs to the oligoribonuclease family.

It localises to the cytoplasm. Functionally, 3'-to-5' exoribonuclease specific for small oligoribonucleotides. This is Oligoribonuclease from Yersinia enterocolitica serotype O:8 / biotype 1B (strain NCTC 13174 / 8081).